The following is a 608-amino-acid chain: Putative pentatricopeptide repeat-containing protein At1g16830 (608 aa).

PPR repeat units lie at residues 107–141 (KPRVFLLLLEIFWRGHIYDKAIEVYTGMSSFGFVP), 142–172 (NTRAMNMMMDVNFKLNVVNGALEIFEGIRFR), 173–210 (NFFSFDIALSHFCSRGGRGDLVGVKIVLKRMIGEGFYP), 211–245 (NRERFGQILRLCCRTGCVSEAFQVVGLMICSGISV), 246–280 (SVNVWSMLVSGFFRSGEPQKAVDLFNKMIQIGCSP), 281–315 (NLVTYTSLIKGFVDLGMVDEAFTVLSKVQSEGLAP), 316–350 (DIVLCNLMIHTYTRLGRFEEARKVFTSLEKRKLVP), 351–381 (DQYTFASILSSLCLSGKFDLVPRITHGIGTD), 383–417 (DLVTGNLLSNCFSKIGYNSYALKVLSIMSYKDFAL), 418–452 (DCYTYTVYLSALCRGGAPRAAIKMYKIIIKEKKHL), 453–487 (DAHFHSAIIDSLIELGKYNTAVHLFKRCILEKYPL), 488–522 (DVVSYTVAIKGLVRAKRIEEAYSLCCDMKEGGIYP), and 523–557 (NRRTYRTIISGLCKEKETEKVRKILRECIQEGVEL).

Belongs to the PPR family. P subfamily.

The chain is Putative pentatricopeptide repeat-containing protein At1g16830 from Arabidopsis thaliana (Mouse-ear cress).